Consider the following 374-residue polypeptide: Pectate lyase 2 (374 aa).

A signal peptide spans 1–22 (MKYLLPTAAAGLLLLAAQPAMA). The cysteines at positions 93 and 176 are disulfide-linked. Asp-150, Asp-152, Glu-187, and Asp-191 together coordinate Ca(2+). Arg-239 is an active-site residue. Cysteines 350 and 373 form a disulfide.

This sequence belongs to the polysaccharide lyase 1 family. PLADES subfamily. It depends on Ca(2+) as a cofactor.

Its subcellular location is the secreted. It catalyses the reaction Eliminative cleavage of (1-&gt;4)-alpha-D-galacturonan to give oligosaccharides with 4-deoxy-alpha-D-galact-4-enuronosyl groups at their non-reducing ends.. Its pathway is glycan metabolism; pectin degradation; 2-dehydro-3-deoxy-D-gluconate from pectin: step 2/5. Its function is as follows. Involved in maceration and soft-rotting of plant tissue. This is Pectate lyase 2 (pel2) from Pectobacterium carotovorum (Erwinia carotovora).